The following is a 157-amino-acid chain: NudC domain-containing protein 2 (157 aa).

Serine 2 carries the post-translational modification N-acetylserine. The CS domain maps to 14-104 (CGTPWGQWYQ…DAANCWTSLL (91 aa)). The segment at 134-157 (FDFSGAEISGNYTKGGPDFSNLEK) is disordered. Position 142 is a phosphoserine (serine 142). Tyrosine 145 bears the Phosphotyrosine mark.

As to quaternary structure, interacts with LIS1.

The protein resides in the chromosome. Its subcellular location is the centromere. It is found in the kinetochore. It localises to the cytoplasm. The protein localises to the cytoskeleton. The protein resides in the microtubule organizing center. Its subcellular location is the centrosome. It is found in the spindle pole. In terms of biological role, may regulate the LIS1/dynein pathway by stabilizing LIS1 with Hsp90 chaperone. This Mus musculus (Mouse) protein is NudC domain-containing protein 2 (Nudcd2).